The following is an 81-amino-acid chain: Beta-catenin-interacting protein 1 (81 aa).

S59 carries the post-translational modification Phosphoserine.

It belongs to the CTNNBIP1 family. In terms of assembly, binds CTNNB1.

It is found in the cytoplasm. The protein localises to the nucleus. Functionally, prevents the interaction between CTNNB1 and TCF family members, and acts as a negative regulator of the Wnt signaling pathway. This Bos taurus (Bovine) protein is Beta-catenin-interacting protein 1 (CTNNBIP1).